The sequence spans 341 residues: Putative gustatory receptor 9a (341 aa).

A topological domain (cytoplasmic) is located at residue Met1. Residues 2 to 22 form a helical membrane-spanning segment; that stretch reads SLWLEHFLTGYFQLCGLVCGW. Over 23–30 the chain is Extracellular; it reads SGSRLGRL. The helical transmembrane segment at 31 to 51 threads the bilayer; that stretch reads LSSTFLVLILIELVGEIETYF. Over 52-68 the chain is Cytoplasmic; the sequence is TEENPDNESVPAYFAKV. Residues 69–89 traverse the membrane as a helical segment; sequence IMGVNMAYKMIHAWIALSALF. Over 90–113 the chain is Extracellular; sequence ECRRFRYLLEELPPVKATSFIYRH. A helical transmembrane segment spans residues 114 to 134; sequence LILEIILFACNAFLVLSEYTI. Topologically, residues 135 to 202 are cytoplasmic; it reads RGIYLENLRY…LAKVTRSLSH (68 aa). The helical transmembrane segment at 203 to 223 threads the bilayer; it reads LFGLSLLLLNVLCLGDWIIVC. The Extracellular segment spans residues 224–233; that stretch reads NVYFMVAYLQ. The chain crosses the membrane as a helical span at residues 234–254; that stretch reads VLPATLFLFGQVMFVVCPTLI. Residues 255–318 are Cytoplasmic-facing; sequence KIWSICAASH…GIYHLNLQTL (64 aa). The chain crosses the membrane as a helical span at residues 319–339; the sequence is AGMFFFILEALVIFLQFVSLV. Topologically, residues 340 to 341 are extracellular; the sequence is RT.

This sequence belongs to the insect chemoreceptor superfamily. Gustatory receptor (GR) family. Gr2a subfamily. In terms of tissue distribution, expressed in neurons of the terminal external chemosensory organ of larvae.

Its subcellular location is the cell membrane. Its function is as follows. Probable gustatory receptor which mediates acceptance or avoidance behavior, depending on its substrates. This Drosophila melanogaster (Fruit fly) protein is Putative gustatory receptor 9a (Gr9a).